We begin with the raw amino-acid sequence, 237 residues long: Mannose-specific lectin alpha chain (237 aa).

Glu8 and Asp10 together coordinate Mn(2+). Positions 10, 12, 14, and 19 each coordinate Ca(2+). Position 12 (Tyr12) interacts with a carbohydrate. 3 residues coordinate Mn(2+): Asp19, His24, and Ser34. Residue 99 to 100 coordinates a carbohydrate; it reads LY. Ca(2+) is bound at residue Asp208. Arg228 contributes to the a carbohydrate binding site.

This sequence belongs to the leguminous lectin family. In terms of assembly, homotetramer. Post-translationally, the beta and gamma chains are produced by partial proteolytic processing of the lectin alpha chain by an asparaginyl endopeptidase.

In terms of biological role, D-mannose/D-glucose-binding lectin. Also binds derivatives of glucose and mannose such as more complex glycans. This Cymbosema roseum (Dioclea purpurea) protein is Mannose-specific lectin alpha chain.